The chain runs to 102 residues: Small ribosomal subunit protein uS10 (102 aa).

The protein belongs to the universal ribosomal protein uS10 family. Part of the 30S ribosomal subunit.

Functionally, involved in the binding of tRNA to the ribosomes. This chain is Small ribosomal subunit protein uS10, found in Brucella abortus (strain S19).